The following is a 299-amino-acid chain: Probable lipid kinase YegS (299 aa).

Positions 2–133 (AEFPASLLIL…IDMAQVNKQT (132 aa)) constitute a DAGKc domain. ATP-binding positions include Thr40, 66 to 72 (GDGTINE), and Thr95. The Mg(2+) site is built by Leu215, Asp218, and Leu220. Catalysis depends on Glu271, which acts as the Proton acceptor.

Belongs to the diacylglycerol/lipid kinase family. YegS lipid kinase subfamily. Requires Mg(2+) as cofactor. It depends on Ca(2+) as a cofactor.

The protein localises to the cytoplasm. Probably phosphorylates lipids; the in vivo substrate is unknown. In Shigella dysenteriae serotype 1 (strain Sd197), this protein is Probable lipid kinase YegS.